Reading from the N-terminus, the 525-residue chain is Anti-silencing protein 2 (525 aa).

Residues 467–525 (LPRVPTDSPQLPSKDKSQETAKKDDRPKLVANEPVTLDTSTPPVAQSLADSKHCSGLHK) form a disordered region. Basic and acidic residues predominate over residues 479 to 494 (SKDKSQETAKKDDRPK).

Its function is as follows. Derepression of silent mating type loci when overexpressed. In Saccharomyces cerevisiae (strain ATCC 204508 / S288c) (Baker's yeast), this protein is Anti-silencing protein 2 (ASF2).